The following is a 162-amino-acid chain: Protein A49 (162 aa).

It belongs to the poxviridae A49 protein family.

In Homo sapiens (Human), this protein is Protein A49.